The primary structure comprises 200 residues: Probable molybdenum cofactor guanylyltransferase (200 aa).

Residues 9 to 11 (LAG), Lys21, Asp69, and Asp100 each bind GTP. Residue Asp100 participates in Mg(2+) binding.

This sequence belongs to the MobA family. The cofactor is Mg(2+).

Its subcellular location is the cytoplasm. It carries out the reaction Mo-molybdopterin + GTP + H(+) = Mo-molybdopterin guanine dinucleotide + diphosphate. Functionally, transfers a GMP moiety from GTP to Mo-molybdopterin (Mo-MPT) cofactor (Moco or molybdenum cofactor) to form Mo-molybdopterin guanine dinucleotide (Mo-MGD) cofactor. In Bacillus cereus (strain ZK / E33L), this protein is Probable molybdenum cofactor guanylyltransferase.